We begin with the raw amino-acid sequence, 257 residues long: Glutamate racemase (257 aa).

Residues 12 to 13 (DS) and 44 to 45 (YG) each bind substrate. Cys-75 functions as the Proton donor/acceptor in the catalytic mechanism. 76 to 77 (NT) serves as a coordination point for substrate. Cys-176 acts as the Proton donor/acceptor in catalysis. A substrate-binding site is contributed by 177-178 (TH).

The protein belongs to the aspartate/glutamate racemases family.

It carries out the reaction L-glutamate = D-glutamate. It functions in the pathway cell wall biogenesis; peptidoglycan biosynthesis. Functionally, provides the (R)-glutamate required for cell wall biosynthesis. The polypeptide is Glutamate racemase (Thermus thermophilus (strain ATCC 27634 / DSM 579 / HB8)).